The chain runs to 208 residues: Proheparin-binding EGF-like growth factor (208 aa).

Residues 1–19 form the signal peptide; it reads MKLLPSVVLKLFLAAVLSA. Positions 20–62 are cleaved as a propeptide — or 72, or 73, or 76, or 81; it reads LVTGESLERLRRGLAAGTSNPDPPTVSTDQLLPLGGGRDRKVR. The Extracellular segment spans residues 20 to 160; the sequence is LVTGESLERL…ENRLYTYDHT (141 aa). The disordered stretch occupies residues 33–56; that stretch reads LAAGTSNPDPPTVSTDQLLPLGGG. Residues 36 to 49 show a composition bias toward polar residues; that stretch reads GTSNPDPPTVSTDQ. A glycan (O-linked (GalNAc...) threonine) is linked at Thr-37. Ser-38 carries O-linked (GalNAc...) serine glycosylation. 4 O-linked (GalNAc...) threonine glycosylation sites follow: Thr-44, Thr-47, Thr-75, and Thr-85. Positions 82-104 are disordered; sequence ALATPNKEEHGKRKKKGKGLGKK. Residues 93–102 are compositionally biased toward basic residues; that stretch reads KRKKKGKGLG. Residues 104–144 enclose the EGF-like domain; the sequence is KRDPCLRKYKDFCIHGECKYVKELRAPSCICHPGYHGERCH. Disulfide bonds link Cys-108–Cys-121, Cys-116–Cys-132, and Cys-134–Cys-143. Residues 149-208 constitute a propeptide, C-terminal; it reads PVENRLYTYDHTTILAVVAVVLSSVCLLVIVGLLMFRYHRRGGYDVENEEKVKLGMTNSH. The helical transmembrane segment at 161–184 threads the bilayer; it reads TILAVVAVVLSSVCLLVIVGLLMF. The Cytoplasmic portion of the chain corresponds to 185–208; the sequence is RYHRRGGYDVENEEKVKLGMTNSH.

In terms of assembly, interacts with FBLN1. Interacts with EGFR and ERBB4. Several N-termini have been identified by direct sequencing. The forms with N-termini 63, 73 and 74 have been tested and found to be biologically active. In terms of processing, O-glycosylated with core 1 or possibly core 8 glycans. Thr-47 is a minor glycosylation site compared to Thr-44.

It localises to the secreted. It is found in the extracellular space. The protein localises to the cell membrane. Its function is as follows. Growth factor that mediates its effects via EGFR, ERBB2 and ERBB4. Required for normal cardiac valve formation and normal heart function. Promotes smooth muscle cell proliferation. May be involved in macrophage-mediated cellular proliferation. It is mitogenic for fibroblasts, but not endothelial cells. It is able to bind EGF receptor/EGFR with higher affinity than EGF itself and is a far more potent mitogen for smooth muscle cells than EGF. Also acts as a diphtheria toxin receptor. This Homo sapiens (Human) protein is Proheparin-binding EGF-like growth factor (HBEGF).